The primary structure comprises 396 residues: Succinyl-diaminopimelate desuccinylase (396 aa).

A Zn(2+)-binding site is contributed by His74. Asp76 is a catalytic residue. Asp107 contributes to the Zn(2+) binding site. The active-site Proton acceptor is Glu142. Glu143, Glu171, and His360 together coordinate Zn(2+).

It belongs to the peptidase M20A family. DapE subfamily. As to quaternary structure, homodimer. Zn(2+) serves as cofactor. Requires Co(2+) as cofactor.

It carries out the reaction N-succinyl-(2S,6S)-2,6-diaminopimelate + H2O = (2S,6S)-2,6-diaminopimelate + succinate. The protein operates within amino-acid biosynthesis; L-lysine biosynthesis via DAP pathway; LL-2,6-diaminopimelate from (S)-tetrahydrodipicolinate (succinylase route): step 3/3. Catalyzes the hydrolysis of N-succinyl-L,L-diaminopimelic acid (SDAP), forming succinate and LL-2,6-diaminopimelate (DAP), an intermediate involved in the bacterial biosynthesis of lysine and meso-diaminopimelic acid, an essential component of bacterial cell walls. The protein is Succinyl-diaminopimelate desuccinylase of Methylobacterium nodulans (strain LMG 21967 / CNCM I-2342 / ORS 2060).